The following is a 204-amino-acid chain: Protease (204 aa).

Active-site residues include H53, D70, and C121.

This sequence belongs to the peptidase C5 family. Interacts with protease cofactor pVI-C; this interaction is necessary for protease activation.

It localises to the virion. The protein resides in the host nucleus. The enzyme catalyses Cleaves proteins of the adenovirus and its host cell at two consensus sites: -Yaa-Xaa-Gly-Gly-|-Xaa- and -Yaa-Xaa-Gly-Xaa-|-Gly- (in which Yaa is Met, Ile or Leu, and Xaa is any amino acid).. With respect to regulation, requires DNA and protease cofactor for maximal activation. Inside nascent virions, becomes partially activated by binding to the viral DNA, allowing it to cleave the cofactor that binds to the protease and fully activates it. Actin, like the viral protease cofactor, seems to act as a cofactor in the cleavage of cytokeratin 18 and of actin itself. Cleaves viral precursor proteins (pTP, pIIIa, pVI, pVII, pVIII, and pX) inside newly assembled particles giving rise to mature virions. Protease complexed to its cofactor slides along the viral DNA to specifically locate and cleave the viral precursors. Mature virions have a weakened organization compared to the unmature virions, thereby facilitating subsequent uncoating. Without maturation, the particle lacks infectivity and is unable to uncoat. Late in adenovirus infection, in the cytoplasm, may participate in the cytoskeleton destruction. Cleaves host cell cytoskeletal keratins K7 and K18. This chain is Protease, found in Porcine adenovirus A serotype 3 (PAdV-3).